Here is a 528-residue protein sequence, read N- to C-terminus: Cytochrome P450 monooxygenase polB (528 aa).

The chain crosses the membrane as a helical span at residues 3–23; sequence SFFLVCPVAFLGFTICYLVYV. Residue Cys-473 coordinates heme.

Belongs to the cytochrome P450 family. It depends on heme as a cofactor.

Its subcellular location is the membrane. The catalysed reaction is 4beta-carboxyl motiol + reduced [NADPH--hemoprotein reductase] + O2 = 2alpha-hydroxyl, 4beta-carboxyl motiol + oxidized [NADPH--hemoprotein reductase] + H2O + H(+). The enzyme catalyses 2-deoxypolytolypin + reduced [NADPH--hemoprotein reductase] + O2 = polytolypin + oxidized [NADPH--hemoprotein reductase] + H2O + H(+). It participates in secondary metabolite biosynthesis; terpenoid biosynthesis. Cytochrome P450 monooxygenase; part of the gene cluster that mediates the biosynthesis of antifungal fernane-type triterpenoid polytolypin. PolB acts as a hydroxylase and installs the 2-alpha-hydroxyl group in polytolypin. Within the pathway, the triterpene cyclase polA first catalyzes the cyclization of 2,3-oxidosqualene to motiol, polC converts the 4-alpha-methyl group of motiol to a carboxyl group, polB is responsible for appending a hydroxyl group at the 2-alpha position and polE is a dual functional P450, which can catalyze the formation of both the 1-beta-hydroxyl group and 10-beta-carboxyl group. This is Cytochrome P450 monooxygenase polB from Polytolypa hystricis (strain UAMH7299).